The primary structure comprises 352 residues: Glycerol-1-phosphate dehydrogenase [NAD(P)+] (352 aa).

Residues 99-103 (GTKID) and 121-124 (TSPS) contribute to the NAD(+) site. Asp-126 provides a ligand contact to substrate. NAD(+) is bound at residue Ser-130. Asp-173 contributes to the substrate binding site. The Zn(2+) site is built by Asp-173 and His-253. His-257 contacts substrate. Residue His-269 participates in Zn(2+) binding.

Belongs to the glycerol-1-phosphate dehydrogenase family. Zn(2+) serves as cofactor.

It localises to the cytoplasm. It carries out the reaction sn-glycerol 1-phosphate + NAD(+) = dihydroxyacetone phosphate + NADH + H(+). The enzyme catalyses sn-glycerol 1-phosphate + NADP(+) = dihydroxyacetone phosphate + NADPH + H(+). Its pathway is membrane lipid metabolism; glycerophospholipid metabolism. Catalyzes the NAD(P)H-dependent reduction of dihydroxyacetonephosphate (DHAP or glycerone phosphate) to glycerol 1-phosphate (G1P). The G1P thus generated is used as the glycerophosphate backbone of phospholipids in the cellular membranes of Archaea. The protein is Glycerol-1-phosphate dehydrogenase [NAD(P)+] of Thermoplasma volcanium (strain ATCC 51530 / DSM 4299 / JCM 9571 / NBRC 15438 / GSS1).